Reading from the N-terminus, the 159-residue chain is Putative ribosomal RNA large subunit methyltransferase H (159 aa).

Residues L76, G108, and F127 to F132 each bind S-adenosyl-L-methionine.

Belongs to the RNA methyltransferase RlmH family.

The protein resides in the cytoplasm. It catalyses the reaction pseudouridine(1915) in 23S rRNA + S-adenosyl-L-methionine = N(3)-methylpseudouridine(1915) in 23S rRNA + S-adenosyl-L-homocysteine + H(+). Its function is as follows. Specifically methylates the pseudouridine at position 1915 (m3Psi1915) in 23S rRNA. The chain is Putative ribosomal RNA large subunit methyltransferase H from Methanococcus maripaludis (strain C5 / ATCC BAA-1333).